Reading from the N-terminus, the 402-residue chain is UPF0597 protein THA_1286 (402 aa).

This sequence belongs to the UPF0597 family.

The sequence is that of UPF0597 protein THA_1286 from Thermosipho africanus (strain TCF52B).